Here is a 216-residue protein sequence, read N- to C-terminus: ATP-dependent dethiobiotin synthetase BioD (216 aa).

Residue 12 to 17 (GVGKSY) participates in ATP binding. Serine 16 lines the Mg(2+) pocket. The active site involves lysine 37. Substrate is bound at residue threonine 41. Mg(2+) is bound by residues histidine 53 and glutamate 115. 115–118 (EGAG) is a binding site for ATP.

It belongs to the dethiobiotin synthetase family. As to quaternary structure, homodimer. It depends on Mg(2+) as a cofactor.

Its subcellular location is the cytoplasm. The catalysed reaction is (7R,8S)-7,8-diammoniononanoate + CO2 + ATP = (4R,5S)-dethiobiotin + ADP + phosphate + 3 H(+). The protein operates within cofactor biosynthesis; biotin biosynthesis; biotin from 7,8-diaminononanoate: step 1/2. In terms of biological role, catalyzes a mechanistically unusual reaction, the ATP-dependent insertion of CO2 between the N7 and N8 nitrogen atoms of 7,8-diaminopelargonic acid (DAPA, also called 7,8-diammoniononanoate) to form a ureido ring. In Wolinella succinogenes (strain ATCC 29543 / DSM 1740 / CCUG 13145 / JCM 31913 / LMG 7466 / NCTC 11488 / FDC 602W) (Vibrio succinogenes), this protein is ATP-dependent dethiobiotin synthetase BioD.